The sequence spans 177 residues: Dihydrofolate reductase (177 aa).

It catalyses the reaction (6S)-5,6,7,8-tetrahydrofolate + NADP(+) = 7,8-dihydrofolate + NADPH + H(+). Its function is as follows. Provides the tetrahydrofolates necessary for the synthesis of nucleotides and amino acids. Bacteriophage T5 induces high levels of dihydrofolate reductase in the host cell, probably for the viral replication. This chain is Dihydrofolate reductase, found in Escherichia phage T5 (Enterobacteria phage T5).